A 180-amino-acid chain; its full sequence is MKSIYFVAGLFVMLVQGSWQRSLQDTEEKSRSFSAPQTEPLNDLDQMNEDKRHSQGTFTSDYSKYLDSRRAQDFVQWLMNTKRNKNNIAKRHDEFERHAEGTFTSDVSSYLEGQAAKEFIAWLVKGRGRRDFPEEVAIVEEFRRRHADGSFSDEMNTVLDTLATRDFINWLLQTKITDRK.

The first 20 residues, 1–20 (MKSIYFVAGLFVMLVQGSWQ), serve as a signal peptide directing secretion. The disordered stretch occupies residues 26 to 56 (TEEKSRSFSAPQTEPLNDLDQMNEDKRHSQG). Position 54 is a phosphoserine (Ser-54). Positions 84-89 (NKNNIA) are excised as a propeptide. Phosphoserine occurs at positions 105 and 108. Arg-127 is modified (arginine amide). Residues 131 to 145 (DFPEEVAIVEEFRRR) constitute a propeptide that is removed on maturation. Phosphoserine is present on residues Ser-150 and Ser-152.

Belongs to the glucagon family. Post-translationally, proglucagon is post-translationally processed in a tissue-specific manner in pancreatic A cells and intestinal L cells. In pancreatic A cells, the major bioactive hormone is glucagon cleaved by PCSK2/PC2. In the intestinal L cells PCSK1/PC1 liberates GLP-1, GLP-2, glicentin and oxyntomodulin. GLP-1 is further N-terminally truncated by post-translational processing in the intestinal L cells resulting in GLP-1(7-37) GLP-1-(7-36)amide. The C-terminal amidation is neither important for the metabolism of GLP-1 nor for its effects on the endocrine pancreas. Glucagon is secreted in the A cells of the islets of Langerhans. GLP-1, GLP-2, oxyntomodulin and glicentin are secreted from enteroendocrine cells throughout the gastrointestinal tract. GLP-1 and GLP-2 are also secreted in selected neurons in the brain.

The protein resides in the secreted. Plays a key role in glucose metabolism and homeostasis. Regulates blood glucose by increasing gluconeogenesis and decreasing glycolysis. A counterregulatory hormone of insulin, raises plasma glucose levels in response to insulin-induced hypoglycemia. Plays an important role in initiating and maintaining hyperglycemic conditions in diabetes. Functionally, potent stimulator of glucose-dependent insulin release. Also stimulates insulin release in response to IL6. Plays important roles on gastric motility and the suppression of plasma glucagon levels. May be involved in the suppression of satiety and stimulation of glucose disposal in peripheral tissues, independent of the actions of insulin. Has growth-promoting activities on intestinal epithelium. May also regulate the hypothalamic pituitary axis (HPA) via effects on LH, TSH, CRH, oxytocin, and vasopressin secretion. Increases islet mass through stimulation of islet neogenesis and pancreatic beta cell proliferation. Inhibits beta cell apoptosis. Its function is as follows. Stimulates intestinal growth and up-regulates villus height in the small intestine, concomitant with increased crypt cell proliferation and decreased enterocyte apoptosis. The gastrointestinal tract, from the stomach to the colon is the principal target for GLP-2 action. Plays a key role in nutrient homeostasis, enhancing nutrient assimilation through enhanced gastrointestinal function, as well as increasing nutrient disposal. Stimulates intestinal glucose transport and decreases mucosal permeability. In terms of biological role, significantly reduces food intake. Inhibits gastric emptying in humans. Suppression of gastric emptying may lead to increased gastric distension, which may contribute to satiety by causing a sensation of fullness. May modulate gastric acid secretion and the gastro-pyloro-duodenal activity. May play an important role in intestinal mucosal growth in the early period of life. The polypeptide is Pro-glucagon (GCG) (Canis lupus familiaris (Dog)).